The primary structure comprises 560 residues: Secreted RxLR effector protein 142 (560 aa).

An N-terminal signal peptide occupies residues 1–22; that stretch reads MRRAYFVAIALLVAAGGKTAAG. 2 disordered regions span residues 48–73 and 354–377; these read QSQNLQESRDPKDDLKLSAGNEERTP and INRPAPSGPSTNGATTSNGGLNNQ. Residues 54-72 are compositionally biased toward basic and acidic residues; sequence ESRDPKDDLKLSAGNEERT. The short motif at 56–71 is the RxLR-dEER element; that stretch reads RDPKDDLKLSAGNEER. Positions 361 to 377 are enriched in polar residues; that stretch reads GPSTNGATTSNGGLNNQ.

This sequence belongs to the RxLR effector family.

Its subcellular location is the secreted. The protein resides in the host nucleus. In terms of biological role, secreted effector that completely suppresses the host cell death induced by cell death-inducing proteins. The polypeptide is Secreted RxLR effector protein 142 (Plasmopara viticola (Downy mildew of grapevine)).